Consider the following 242-residue polypeptide: Alpha-aspartyl dipeptidase (242 aa).

Active-site charge relay system residues include serine 125, aspartate 140, and histidine 162.

This sequence belongs to the peptidase S51 family.

The protein localises to the cytoplasm. The enzyme catalyses Dipeptidase E catalyzes the hydrolysis of dipeptides Asp-|-Xaa. It does not act on peptides with N-terminal Glu, Asn or Gln, nor does it cleave isoaspartyl peptides.. Functionally, hydrolyzes dipeptides containing N-terminal aspartate residues. This is Alpha-aspartyl dipeptidase (aad-a) from Xenopus laevis (African clawed frog).